Reading from the N-terminus, the 97-residue chain is Antitoxin TacA2 (97 aa).

This sequence belongs to the TacA antitoxin family. Homodimer. Forms a complex with cognate toxin TacT2.

Antitoxin component of a type II toxin-antitoxin (TA) system. Counteracts the toxic effect of cognate toxin TacT2. In terms of biological role, the TacA2-TacT2 complex both represses and derepresses expression of its own operon. In Salmonella enteritidis, this protein is Antitoxin TacA2.